A 940-amino-acid polypeptide reads, in one-letter code: MSDYKFTLNLPETEFPMRGNLANREPEMLERWTKDGLYQQIRDSRIGRTPFILHDGPPYANGSIHIGHSVNKILKDIIVKSKTMSGFDAPYVPGWDCHGLPIELKVEQKVGKPGQKISAAEFREECRKYAAEQVDGQRADFIRLGVLGDWQKPYLTMDFATEANIVRSLSKVIENGHLHKGVKPVHWCTDCGSALAEAEVEYEDKTSPAIDVAFTATDSKAVAAQFGVSDYSHPVAMVIWTTTPWTLPANRALSISPELDYSLVEFAKEGATHAVILADVLVEACMTRYGAESHNVLGKVKGAALELVRFKHPFLAFDVPAILGDHVTTDAGTGVVHTAPGHGQDDFVVGQKYGLEVANPVGDNGVYKPDTEFFAGQHVFKANDNVVALLKEKGALLHHVAYRHSYPHCWRHKTPIIFRATPQWFISMDNQNLRKQALSEIEQTQWIPDWGQSRIEKMVENRPDWCISRQRTWGVPITLFVHRETEELHPDSVSLMARVANRIEQEGIQAWWDLDAAELLGEEAEQYRKVTDTLDVWYDSGSTFASVVGARPEFHGHGVDLYLEGSDQHRGWFMSSLMISTAMTGKAPYKQVLTHGFTVDGKGRKMSKSIGNVIAPQQVTNKLGADILRLWVAATDYSGEMTVSDEILNRSADAYRRIRNTARFLLANLNGFDPAKDLVAVEDMVALDRWAVRRAAALQQEIIEAYEQYNFHIVTQKLMQFCSVELGSFYLDIIKDRQYTAKQEGHARRSCQSALFHIAEAMVRWIAPILSFTADEVWQLLPGQRNAYVFTQEWYQDLQSITLDTDLSDAYWENLLTVRNEVNKVIEQARRDKRIGGSLEAEVTLFADAALTEQLTHIGDELRFVLLTSEAKVLPLADATSDAVETELASLKLVVNATTAEKCERCWHHREEVGKIEAHPTLCHRCVTNIEGDGEVRLFA.

The 'HIGH' region motif lies at 58–68 (PYANGSIHIGH). Glu564 provides a ligand contact to L-isoleucyl-5'-AMP. Positions 605 to 609 (KMSKS) match the 'KMSKS' region motif. An ATP-binding site is contributed by Lys608. Zn(2+)-binding residues include Cys903, Cys906, Cys923, and Cys926.

It belongs to the class-I aminoacyl-tRNA synthetase family. IleS type 1 subfamily. In terms of assembly, monomer. Zn(2+) serves as cofactor.

It localises to the cytoplasm. The catalysed reaction is tRNA(Ile) + L-isoleucine + ATP = L-isoleucyl-tRNA(Ile) + AMP + diphosphate. Functionally, catalyzes the attachment of isoleucine to tRNA(Ile). As IleRS can inadvertently accommodate and process structurally similar amino acids such as valine, to avoid such errors it has two additional distinct tRNA(Ile)-dependent editing activities. One activity is designated as 'pretransfer' editing and involves the hydrolysis of activated Val-AMP. The other activity is designated 'posttransfer' editing and involves deacylation of mischarged Val-tRNA(Ile). The chain is Isoleucine--tRNA ligase from Shewanella sp. (strain MR-4).